The primary structure comprises 304 residues: NAD kinase (304 aa).

Aspartate 77 functions as the Proton acceptor in the catalytic mechanism. Residues 77–78 (DG), arginine 82, 151–152 (NE), arginine 162, aspartate 181, and 192–197 (TAYSFS) contribute to the NAD(+) site.

It belongs to the NAD kinase family. A divalent metal cation is required as a cofactor.

It localises to the cytoplasm. It catalyses the reaction NAD(+) + ATP = ADP + NADP(+) + H(+). In terms of biological role, involved in the regulation of the intracellular balance of NAD and NADP, and is a key enzyme in the biosynthesis of NADP. Catalyzes specifically the phosphorylation on 2'-hydroxyl of the adenosine moiety of NAD to yield NADP. The polypeptide is NAD kinase (Leifsonia xyli subsp. xyli (strain CTCB07)).